The following is a 350-amino-acid chain: MKNVLVYCRQGFEKDCAAELSEVASSKGFYGYAKVVPDAGYIVYNFDQADAGETLIQQLNFNRLIFARQIIAVNDVIELEQGGRVESLLEAARELPLAEEIWIETADTNDAKALSGLIKKLEKPLREGWKRSGVLRNKAVGVRHHVFMLDGEAAYLGVSYAACRSEFPMGIRRLRFPAAGPSRSTLKLEEAFLQFVPEQTLEADLTEGMTAVDLGAAPGGWTYQFVKKGINVIAIDNGPMQKELMSTGLVEHEKADGFKYEPPYTVDWLVCDMVERPIKVAELMAKWLASGWTRRAIFNLKLPMKKRYQEVTLCLQTMEGLLRKAGVSYQYQVKHLYHDREEVTVCIMVK.

Residues serine 184, 217 to 220 (APGG), aspartate 236, aspartate 256, and aspartate 272 contribute to the S-adenosyl-L-methionine site. The Proton acceptor role is filled by lysine 301.

It belongs to the class I-like SAM-binding methyltransferase superfamily. RNA methyltransferase RlmE family. RlmM subfamily. In terms of assembly, monomer.

It localises to the cytoplasm. It carries out the reaction cytidine(2498) in 23S rRNA + S-adenosyl-L-methionine = 2'-O-methylcytidine(2498) in 23S rRNA + S-adenosyl-L-homocysteine + H(+). Catalyzes the 2'-O-methylation at nucleotide C2498 in 23S rRNA. This Marinomonas sp. (strain MWYL1) protein is Ribosomal RNA large subunit methyltransferase M.